The following is a 126-amino-acid chain: Fumarate reductase subunit C (126 aa).

3 helical membrane-spanning segments follow: residues 30 to 50 (IFVA…GAGG), 64 to 84 (VVVV…VTWF), and 105 to 125 (VLAG…WMVL).

Belongs to the FrdC family. In terms of assembly, part of an enzyme complex containing four subunits: a flavoprotein (FrdA), an iron-sulfur protein (FrdB), and two hydrophobic anchor proteins (FrdC and FrdD).

It localises to the cell membrane. Anchors the catalytic components of the fumarate reductase complex to the cell membrane, binds quinones. The polypeptide is Fumarate reductase subunit C (Mycobacterium tuberculosis (strain CDC 1551 / Oshkosh)).